The following is a 938-amino-acid chain: MSDYKSTLNLPETGFPMRGDLAKREPGMLARWTDDDLYGIIRAAKKGKKTFILHDGPPYANGSIHIGHSVNKILKDIIVKSKGLSGYDSPYVPGWDCHGLPIELKVEQEYGKPGEKFTAAEFRAKCREYAATQVDGQRKDFIRLGVLGDWSHPYLTMDFKTEANIIRALGKIIGNGHLHKGAKPVHWCVDCRSALAEAEVEYYDKTSLSIDVAFQAVDQDALKAKFAVSNVNGPISLVIWTTTPWTLPANRAISIAPDFDYALVQIDGQAVILAKDLVESVMQRIGVTDYTILGTVKGAELELLRFTHPFMGFDVPAILGDHVTLDAGTGAVHTAPGHGPDDYVIGQKYGLETANPVGPDGTYLPGTYPTLDGVNVFKANDIVVALLQEKGALLHVEKMQHSYPCCWRHKTPIIFRATPQWFVSMDQKGLRAQSLKEIKGVQWIPDWGQARIESMVANRPDWCISRQRTWGVPMSLFVHKDTEELHPRTLELMEEVAKRVEVDGIQAWWDLDAKEILGDEADQYVKVPDTLDVWFDSGSTHSSVVDVRPEFAGHAADMYLEGSDQHRGWFMSSLMISTAMKGKAPYRQVLTHGFTVDGQGRKMSKSIGNTVSPQDVMNKLGADILRLWVASTDYTGEMAVSDEILKRAADSYRRIRNTARFLLANLNGFDPAKDMVKPEEMVVLDRWAVGCAKAAQEDILKAYEAYDFHEVVQRLMRFCSVEMGSFYLDIIKDRQYTAKADSVARRSCQTALYHIAEALVRWMAPILSFTADEVWGYLPGEREKYVFTGEWYEGLFGLADSEAMNDAFWDELLKVRGEVNKVIEQARADKKVGGSLEAAVTLYAEPELSAKLTALGDELRFVLLTSGATVADYNDAPADAQQSEVLKGLKVALSKAEGEKCPRCWHYTQDVGKVAEHAEICGRCVSNVAGDGEKRKFA.

The short motif at 58-68 is the 'HIGH' region element; sequence PYANGSIHIGH. Position 183 is an N6-acetyllysine (lysine 183). An L-isoleucyl-5'-AMP-binding site is contributed by glutamate 561. A 'KMSKS' region motif is present at residues 602-606; it reads KMSKS. Lysine 605 is a binding site for ATP. Residues cysteine 901, cysteine 904, cysteine 921, and cysteine 924 each coordinate Zn(2+).

This sequence belongs to the class-I aminoacyl-tRNA synthetase family. IleS type 1 subfamily. As to quaternary structure, monomer. Zn(2+) is required as a cofactor.

The protein localises to the cytoplasm. It carries out the reaction tRNA(Ile) + L-isoleucine + ATP = L-isoleucyl-tRNA(Ile) + AMP + diphosphate. Catalyzes the attachment of isoleucine to tRNA(Ile). As IleRS can inadvertently accommodate and process structurally similar amino acids such as valine, to avoid such errors it has two additional distinct tRNA(Ile)-dependent editing activities. One activity is designated as 'pretransfer' editing and involves the hydrolysis of activated Val-AMP. The other activity is designated 'posttransfer' editing and involves deacylation of mischarged Val-tRNA(Ile). The sequence is that of Isoleucine--tRNA ligase from Escherichia coli O9:H4 (strain HS).